The primary structure comprises 172 residues: Protein GrpE (172 aa).

This sequence belongs to the GrpE family. As to quaternary structure, homodimer.

It is found in the cytoplasm. Participates actively in the response to hyperosmotic and heat shock by preventing the aggregation of stress-denatured proteins, in association with DnaK and GrpE. It is the nucleotide exchange factor for DnaK and may function as a thermosensor. Unfolded proteins bind initially to DnaJ; upon interaction with the DnaJ-bound protein, DnaK hydrolyzes its bound ATP, resulting in the formation of a stable complex. GrpE releases ADP from DnaK; ATP binding to DnaK triggers the release of the substrate protein, thus completing the reaction cycle. Several rounds of ATP-dependent interactions between DnaJ, DnaK and GrpE are required for fully efficient folding. The protein is Protein GrpE of Thermotoga petrophila (strain ATCC BAA-488 / DSM 13995 / JCM 10881 / RKU-1).